A 229-amino-acid polypeptide reads, in one-letter code: Large ribosomal subunit protein uL1 (229 aa).

Belongs to the universal ribosomal protein uL1 family. As to quaternary structure, part of the 50S ribosomal subunit.

In terms of biological role, binds directly to 23S rRNA. The L1 stalk is quite mobile in the ribosome, and is involved in E site tRNA release. Functionally, protein L1 is also a translational repressor protein, it controls the translation of the L11 operon by binding to its mRNA. In Clostridium botulinum (strain ATCC 19397 / Type A), this protein is Large ribosomal subunit protein uL1.